The following is a 206-amino-acid chain: Xanthine phosphoribosyltransferase (206 aa).

The xanthine site is built by leucine 28 and asparagine 35. 136-140 (ANGQA) is a 5-phospho-alpha-D-ribose 1-diphosphate binding site. Residue lysine 164 participates in xanthine binding.

This sequence belongs to the purine/pyrimidine phosphoribosyltransferase family. Xpt subfamily. As to quaternary structure, homodimer.

The protein localises to the cytoplasm. The enzyme catalyses XMP + diphosphate = xanthine + 5-phospho-alpha-D-ribose 1-diphosphate. It participates in purine metabolism; XMP biosynthesis via salvage pathway; XMP from xanthine: step 1/1. Converts the preformed base xanthine, a product of nucleic acid breakdown, to xanthosine 5'-monophosphate (XMP), so it can be reused for RNA or DNA synthesis. The chain is Xanthine phosphoribosyltransferase from Oenococcus oeni (strain ATCC BAA-331 / PSU-1).